The following is a 564-amino-acid chain: Probable cysteine--tRNA ligase, mitochondrial (564 aa).

C78 provides a ligand contact to Zn(2+). Residue G79 coordinates L-cysteine. A 'HIGH' region motif is present at residues 80–90 (PTVYDHAHLGH). L-cysteine is bound at residue T119. A 'KIIK' region motif is present at residues 124–127 (KIIK). 3 residues coordinate Zn(2+): C257, H282, and E286. Residue H282 coordinates L-cysteine. The 'KMSKS' region motif lies at 317-321 (KMSKS). K320 is a binding site for ATP.

The protein belongs to the class-I aminoacyl-tRNA synthetase family. Requires Zn(2+) as cofactor.

It is found in the mitochondrion. It carries out the reaction tRNA(Cys) + L-cysteine + ATP = L-cysteinyl-tRNA(Cys) + AMP + diphosphate. It catalyses the reaction 2 L-cysteine = S-sulfanyl-L-cysteine + L-alanine. The catalysed reaction is S-sulfanyl-L-cysteine + L-cysteine = S-disulfanyl-L-cysteine + L-alanine. The enzyme catalyses S-sulfanyl-L-cysteine + tRNA(Cys) + ATP = (S)-sulfanyl-L-cysteinyl-tRNA(Cys) + AMP + diphosphate. It carries out the reaction S-disulfanyl-L-cysteine + tRNA(Cys) + ATP = (S)-disulfanyl-L-cysteinyl-tRNA(Cys) + AMP + diphosphate. Mitochondrial cysteine-specific aminoacyl-tRNA synthetase that catalyzes the ATP-dependent ligation of cysteine to tRNA(Cys). Functionally, in addition to its role as an aminoacyl-tRNA synthetase, has also cysteine persulfide synthase activity. Produces reactive persulfide species such as cysteine persulfide (CysSSH) from substrate cysteine and mediate direct incorporation of CysSSH into proteins during translations, resulting in protein persulfides and polysulfides. CysSSHs behave as potent antioxidants and cellular protectants. This chain is Probable cysteine--tRNA ligase, mitochondrial, found in Homo sapiens (Human).